The sequence spans 165 residues: Transcription elongation factor A protein-like 1 (165 aa).

Disordered stretches follow at residues M1 to E66 and I89 to H124. Acidic residues predominate over residues C33–L60. Over residues H101–H124 the composition is skewed to basic and acidic residues.

The protein belongs to the TFS-II family. TFA subfamily.

It localises to the nucleus. Functionally, may be involved in transcriptional regulation. Modulates various viral and cellular promoters in a promoter context-dependent manner. Does not bind DNA directly. In Rattus norvegicus (Rat), this protein is Transcription elongation factor A protein-like 1.